Consider the following 220-residue polypeptide: WAP four-disulfide core domain protein 1 (220 aa).

The first 31 residues, 1 to 31 (MPLTGVGPGSCRRQIIRALCLLLLLLHAGSA), serve as a signal peptide directing secretion. Positions 46-70 (KSRAEEAGAPGGPRQPRADRCPPPP) are disordered. Positions 59–108 (RQPRADRCPPPPRTLPPGACQAARCQADSECPRHRRCCYNGCAYACLEAV) constitute a WAP domain. Intrachain disulfides connect cysteine 66–cysteine 96, cysteine 78–cysteine 100, cysteine 83–cysteine 95, and cysteine 89–cysteine 104. Residues 199–220 (EYPEGDSKNVAEPGRGQQKHFQ) form a disordered region.

The protein resides in the secreted. Has growth inhibitory activity. In Homo sapiens (Human), this protein is WAP four-disulfide core domain protein 1 (WFDC1).